The following is a 281-amino-acid chain: Microtubule-associated protein RP/EB family member 3 (281 aa).

In terms of domain architecture, Calponin-homology (CH) spans 14–116 (NLSRHDMLAW…FIQWFKKFFD (103 aa)). Positions 157-181 (VPQRTSPTGPKNMQTSGRLSNVAPP) are disordered. The span at 158–175 (PQRTSPTGPKNMQTSGRL) shows a compositional bias: polar residues. 2 positions are modified to phosphoserine: serine 162 and serine 176. Positions 194-264 (GGHETDAQIL…LYATEEGFAP (71 aa)) constitute an EB1 C-terminal domain. The tract at residues 217-260 (DGLEKERDFYFSKLRDIELICQEHESENSPVISGIIGILYATEE) is APC-binding. Positions 217-281 (DGLEKERDFY…EHQQEDQDEY (65 aa)) are DCTN1-binding. The disordered stretch occupies residues 261–281 (GFAPPEDDEIEEHQQEDQDEY). Positions 272–281 (EHQQEDQDEY) are enriched in basic and acidic residues.

It belongs to the MAPRE family. As to quaternary structure, homodimer. Heterodimer with MAPRE1. Binds monomeric and polymerized GTP-bound tubulin. Interacts with APC2. Interacts with DCTN1 and SRCIN1. Binds to the C-terminal domain of APC. Interacts (via C-terminus) with CLIP1. Interacts with SLAIN2 and SLAIN1. Interacts with AKAP9. Interacts with PDE4DIP. Interacts with PDE4DIP isoform 13/MMG8/SMYLE; this interaction is required for its recruitment to the Golgi apparatus. As to expression, predominantly expressed in brain and muscle.

The protein localises to the cytoplasm. It is found in the cytoskeleton. Plus-end tracking protein (+TIP) that binds to the plus-end of microtubules and regulates the dynamics of the microtubule cytoskeleton. Promotes microtubule growth. May be involved in spindle function by stabilizing microtubules and anchoring them at centrosomes. Also acts as a regulator of minus-end microtubule organization: interacts with the complex formed by AKAP9 and PDE4DIP, leading to recruit CAMSAP2 to the Golgi apparatus, thereby tethering non-centrosomal minus-end microtubules to the Golgi, an important step for polarized cell movement. Promotes elongation of CAMSAP2-decorated microtubule stretches on the minus-end of microtubules. The polypeptide is Microtubule-associated protein RP/EB family member 3 (MAPRE3) (Homo sapiens (Human)).